Here is a 294-residue protein sequence, read N- to C-terminus: MEDSMDMDMSPLRPQNYLFGCELKADRDYHFKVDNDENEHQLSLRTVSLGAGAKDELHVVEAEAMNYEGSPIKVTLATLKMSVQPTVSLGGFEITPPVVLRLKCGSGPVHISGQHLVAVEEDAESEEEEEEEVKLLSISGKRSAPGSGSKVPQKKVKLAADEDEDDDDDDDDDDDEDDDDDDFDEEVEEKAPVKKSVRDTPAKNAQKSNQNGKDSKPSTPRSKGQESFKKQEKTPKTPRGPSSVEDIKAKMQASIEKGGSLPKVEAKFINYVKNCFRMTDQEAIQDLWQWRKSL.

Position 1 is an N-acetylmethionine (methionine 1). Residues 1–117 (MEDSMDMDMS…PVHISGQHLV (117 aa)) are necessary for interaction with APEX1. Residues 1-187 (MEDSMDMDMS…DDDDDFDEEV (187 aa)) are required for interaction with SENP3. Serine 4 carries the post-translational modification Phosphoserine; by PLK1 and PLK2. Phosphoserine is present on serine 10. Lysine 32 is modified (N6-acetyllysine; alternate). Lysine 32 participates in a covalent cross-link: Glycyl lysine isopeptide (Lys-Gly) (interchain with G-Cter in SUMO1); alternate. Lysine 32 participates in a covalent cross-link: Glycyl lysine isopeptide (Lys-Gly) (interchain with G-Cter in SUMO2); alternate. Serine 43 carries the phosphoserine modification. Tyrosine 67 carries the phosphotyrosine modification. Serine 70 bears the Phosphoserine mark. A phosphothreonine mark is found at threonine 75 and threonine 95. Positions 121 to 132 (EDAESEEEEEEE) are enriched in acidic residues. The tract at residues 121-249 (EDAESEEEEE…GPSSVEDIKA (129 aa)) is disordered. Serine 125 carries the phosphoserine; by CDK2 modification. Residues serine 137 and serine 139 each carry the phosphoserine modification. Lysine 141 is covalently cross-linked (Glycyl lysine isopeptide (Lys-Gly) (interchain with G-Cter in SUMO2)). Position 150 is an N6-acetyllysine; alternate (lysine 150). A Glycyl lysine isopeptide (Lys-Gly) (interchain with G-Cter in SUMO2); alternate cross-link involves residue lysine 150. The Nuclear localization signal motif lies at 152–157 (PQKKVK). At lysine 154 the chain carries N6-acetyllysine. The segment covering 161–188 (DEDEDDDDDDDDDDDEDDDDDDFDEEVE) has biased composition (acidic residues). The segment at 188 to 216 (EEKAPVKKSVRDTPAKNAQKSNQNGKDSK) is interaction with NOP2. A compositionally biased stretch (basic and acidic residues) spans 189–201 (EKAPVKKSVRDTP). The Nuclear localization signal motif lies at 192 to 198 (PVKKSVR). Position 200 is a phosphothreonine; by CDK1 and CDK2 (threonine 200). Residues 203–222 (KNAQKSNQNGKDSKPSTPRS) show a composition bias toward polar residues. Serine 208 bears the ADP-ribosylserine mark. Lysine 213 bears the N6-acetyllysine mark. Lysine 216 is covalently cross-linked (Glycyl lysine isopeptide (Lys-Gly) (interchain with G-Cter in SUMO2)). Threonine 219 is modified (phosphothreonine; by CDK1). Residues 223-235 (KGQESFKKQEKTP) are compositionally biased toward basic and acidic residues. At serine 227 the chain carries Phosphoserine. The residue at position 229 (lysine 229) is an N6-acetyllysine. Lysine 230 is modified (N6-acetyllysine; alternate). A Glycyl lysine isopeptide (Lys-Gly) (interchain with G-Cter in SUMO); alternate cross-link involves residue lysine 230. Residues threonine 234 and threonine 237 each carry the phosphothreonine modification. Phosphoserine is present on residues serine 242 and serine 243. The required for nucleolar localization stretch occupies residues 243 to 294 (SVEDIKAKMQASIEKGGSLPKVEAKFINYVKNCFRMTDQEAIQDLWQWRKSL). Lysine 248 participates in a covalent cross-link: Glycyl lysine isopeptide (Lys-Gly) (interchain with G-Cter in SUMO1); alternate. Glycyl lysine isopeptide (Lys-Gly) (interchain with G-Cter in SUMO2); alternate cross-links involve residues lysine 248 and lysine 250. N6-acetyllysine; alternate is present on lysine 250. At serine 254 the chain carries Phosphoserine. N6-acetyllysine; alternate is present on lysine 257. Lysine 257 participates in a covalent cross-link: Glycyl lysine isopeptide (Lys-Gly) (interchain with G-Cter in SUMO1); alternate. Residue lysine 257 forms a Glycyl lysine isopeptide (Lys-Gly) (interchain with G-Cter in SUMO2); alternate linkage. The residue at position 260 (serine 260) is a Phosphoserine. Glycyl lysine isopeptide (Lys-Gly) (interchain with G-Cter in SUMO2); alternate cross-links involve residues lysine 263, lysine 267, and lysine 273. A Glycyl lysine isopeptide (Lys-Gly) (interchain with G-Cter in SUMO); alternate cross-link involves residue lysine 263. Residues lysine 267 and lysine 273 each carry the N6-acetyllysine; alternate modification. A Glycyl lysine isopeptide (Lys-Gly) (interchain with G-Cter in SUMO1); alternate cross-link involves residue lysine 267. Lysine 267 bears the N6-succinyllysine; alternate mark. Position 279 is a phosphothreonine (threonine 279). An N6-acetyllysine modification is found at lysine 292.

The protein belongs to the nucleoplasmin family. Decamer formed by two pentameric rings associated in a head-to-head fashion. Disulfide-linked dimers under certain conditions. The SWAP complex consists of NPM1, NCL, PARP1 and SWAP70. Interacts with NSUN2 and SENP3. Interacts with the methylated form of RPS10. Interacts (via N-terminal domain) with APEX1; the interaction is RNA-dependent and decreases in hydrogen peroxide-damaged cells. Interacts with isoform 1 of NEK2. Interacts with ROCK2 and BRCA2. Interacts with RPGR. Interacts with CENPW. Interacts with EIF2AK2/PKR. Interacts with CEBPA (isoform 4). Interacts with DDX31; this interaction prevents interaction between NPM1 and HDM2. Interacts with MYC; competitive with NOP53. Interacts with NOP53; the interaction is direct and competitive with MYC. Interacts with LRRC34. Interacts with RRP1B. Interacts with NPM3. Interacts with ALKBH2. Interacts with TTF1 (via C-terminal region). Interacts with NOP2. Interacts with ARID3C (via REKLES DOMAIN); the interaction mediates ARID3C nuclear shuttling. In terms of processing, acetylated at C-terminal lysine residues, thereby increasing affinity to histones. ADP-ribosylated. Post-translationally, phosphorylated at Ser-4 by PLK1 and PLK2. Phosphorylation at Ser-4 by PLK2 in S phase is required for centriole duplication and is sufficient to trigger centriole replication. Phosphorylation at Ser-4 by PLK1 takes place during mitosis. Phosphorylated by CDK2 at Ser-125 and Thr-200. Phosphorylation at Thr-200 may trigger initiation of centrosome duplication. Phosphorylated by CDK1 at Thr-200, Thr-219, Thr-234 and Thr-237 during cell mitosis. When these four sites are phosphorated, RNA-binding activity seem to be abolished. May be phosphorylated at Ser-70 by NEK2. The Thr-200 phosphorylated form has higher affinity for ROCK2. In terms of processing, sumoylated by ARF. May be ubiquitinated. Ubiquitination leads to proteasomal degradation. Deubiquitinated by USP36.

The protein localises to the nucleus. Its subcellular location is the nucleolus. It localises to the nucleoplasm. It is found in the cytoplasm. The protein resides in the cytoskeleton. The protein localises to the microtubule organizing center. Its subcellular location is the centrosome. Functionally, involved in diverse cellular processes such as ribosome biogenesis, centrosome duplication, protein chaperoning, histone assembly, cell proliferation, and regulation of tumor suppressors p53/TP53 and ARF. Binds ribosome presumably to drive ribosome nuclear export. Associated with nucleolar ribonucleoprotein structures and bind single-stranded nucleic acids. Acts as a chaperonin for the core histones H3, H2B and H4. Stimulates APEX1 endonuclease activity on apurinic/apyrimidinic (AP) double-stranded DNA but inhibits APEX1 endonuclease activity on AP single-stranded RNA. May exert a control of APEX1 endonuclease activity within nucleoli devoted to repair AP on rDNA and the removal of oxidized rRNA molecules. In concert with BRCA2, regulates centrosome duplication. Regulates centriole duplication: phosphorylation by PLK2 is able to trigger centriole replication. Negatively regulates the activation of EIF2AK2/PKR and suppresses apoptosis through inhibition of EIF2AK2/PKR autophosphorylation. Antagonizes the inhibitory effect of ATF5 on cell proliferation and relieves ATF5-induced G2/M blockade. In complex with MYC enhances the transcription of MYC target genes. May act as chaperonin or cotransporter in the nucleolar localization of transcription termination factor TTF1. The protein is Nucleophosmin (NPM1) of Bos taurus (Bovine).